A 128-amino-acid chain; its full sequence is Large ribosomal subunit protein bL12 (128 aa).

This sequence belongs to the bacterial ribosomal protein bL12 family. In terms of assembly, homodimer. Part of the ribosomal stalk of the 50S ribosomal subunit. Forms a multimeric L10(L12)X complex, where L10 forms an elongated spine to which 2 to 4 L12 dimers bind in a sequential fashion. Binds GTP-bound translation factors.

Its function is as follows. Forms part of the ribosomal stalk which helps the ribosome interact with GTP-bound translation factors. Is thus essential for accurate translation. The chain is Large ribosomal subunit protein bL12 from Kocuria rhizophila (strain ATCC 9341 / DSM 348 / NBRC 103217 / DC2201).